The primary structure comprises 440 residues: Thymidine phosphorylase (440 aa).

Belongs to the thymidine/pyrimidine-nucleoside phosphorylase family. In terms of assembly, homodimer.

The enzyme catalyses thymidine + phosphate = 2-deoxy-alpha-D-ribose 1-phosphate + thymine. Its pathway is pyrimidine metabolism; dTMP biosynthesis via salvage pathway; dTMP from thymine: step 1/2. Its function is as follows. The enzymes which catalyze the reversible phosphorolysis of pyrimidine nucleosides are involved in the degradation of these compounds and in their utilization as carbon and energy sources, or in the rescue of pyrimidine bases for nucleotide synthesis. The protein is Thymidine phosphorylase of Burkholderia pseudomallei (strain K96243).